The chain runs to 273 residues: Phosphate import ATP-binding protein PstB (273 aa).

Residues 19 to 258 (ISIQNVTISY…FNETEKIFNS (240 aa)) form the ABC transporter domain. An ATP-binding site is contributed by 51 to 58 (GPSGCGKS).

It belongs to the ABC transporter superfamily. Phosphate importer (TC 3.A.1.7) family. As to quaternary structure, the complex is composed of two ATP-binding proteins (PstB), two transmembrane proteins (PstC and PstA) and a solute-binding protein (PstS).

The protein resides in the cell inner membrane. It catalyses the reaction phosphate(out) + ATP + H2O = ADP + 2 phosphate(in) + H(+). Functionally, part of the ABC transporter complex PstSACB involved in phosphate import. Responsible for energy coupling to the transport system. This chain is Phosphate import ATP-binding protein PstB, found in Parasynechococcus marenigrum (strain WH8102).